Here is a 445-residue protein sequence, read N- to C-terminus: tRNA-2-methylthio-N(6)-dimethylallyladenosine synthase (445 aa).

One can recognise an MTTase N-terminal domain in the interval 13–129; it reads KKLFIKTYGC…LPAMARAGRG (117 aa). Positions 22, 58, 92, 163, 167, and 170 each coordinate [4Fe-4S] cluster. A Radical SAM core domain is found at 149 to 383; it reads TRRAPAAFLT…LTSQQKAAQE (235 aa). Residues 383–445 form the TRAM domain; sequence EGMVGRELGV…PNSLAGVLAA (63 aa).

It belongs to the methylthiotransferase family. MiaB subfamily. As to quaternary structure, monomer. [4Fe-4S] cluster serves as cofactor.

It is found in the cytoplasm. It carries out the reaction N(6)-dimethylallyladenosine(37) in tRNA + (sulfur carrier)-SH + AH2 + 2 S-adenosyl-L-methionine = 2-methylsulfanyl-N(6)-dimethylallyladenosine(37) in tRNA + (sulfur carrier)-H + 5'-deoxyadenosine + L-methionine + A + S-adenosyl-L-homocysteine + 2 H(+). In terms of biological role, catalyzes the methylthiolation of N6-(dimethylallyl)adenosine (i(6)A), leading to the formation of 2-methylthio-N6-(dimethylallyl)adenosine (ms(2)i(6)A) at position 37 in tRNAs that read codons beginning with uridine. This Paracoccus denitrificans (strain Pd 1222) protein is tRNA-2-methylthio-N(6)-dimethylallyladenosine synthase.